We begin with the raw amino-acid sequence, 221 residues long: Membrane-bound lytic murein transglycosylase E (221 aa).

The protein belongs to the transglycosylase Slt family.

It catalyses the reaction Exolytic cleavage of the (1-&gt;4)-beta-glycosidic linkage between N-acetylmuramic acid (MurNAc) and N-acetylglucosamine (GlcNAc) residues in peptidoglycan, from either the reducing or the non-reducing ends of the peptidoglycan chains, with concomitant formation of a 1,6-anhydrobond in the MurNAc residue.. Functionally, murein-degrading enzyme. May play a role in recycling of muropeptides during cell elongation and/or cell division. In Buchnera aphidicola subsp. Acyrthosiphon pisum (strain APS) (Acyrthosiphon pisum symbiotic bacterium), this protein is Membrane-bound lytic murein transglycosylase E (mltE).